The primary structure comprises 203 residues: Peptide deformylase (203 aa).

Residues cysteine 121 and histidine 163 each contribute to the Fe cation site. Glutamate 164 is a catalytic residue. Histidine 167 serves as a coordination point for Fe cation.

It belongs to the polypeptide deformylase family. Fe(2+) is required as a cofactor.

It carries out the reaction N-terminal N-formyl-L-methionyl-[peptide] + H2O = N-terminal L-methionyl-[peptide] + formate. In terms of biological role, removes the formyl group from the N-terminal Met of newly synthesized proteins. Requires at least a dipeptide for an efficient rate of reaction. N-terminal L-methionine is a prerequisite for activity but the enzyme has broad specificity at other positions. This Prochlorococcus marinus (strain SARG / CCMP1375 / SS120) protein is Peptide deformylase.